A 275-amino-acid chain; its full sequence is Ditrans,polycis-undecaprenyl-diphosphate synthase ((2E,6E)-farnesyl-diphosphate specific) (275 aa).

Asp45 is a catalytic residue. Asp45 contacts Mg(2+). Substrate-binding positions include 46 to 49 (GNGR), Trp50, Arg58, His62, and 90 to 92 (SSE). The active-site Proton acceptor is the Asn93. Residues Trp94, Arg96, Arg213, and 219–221 (RIS) each bind substrate. Glu232 contacts Mg(2+).

The protein belongs to the UPP synthase family. As to quaternary structure, homodimer. Mg(2+) is required as a cofactor.

It carries out the reaction 8 isopentenyl diphosphate + (2E,6E)-farnesyl diphosphate = di-trans,octa-cis-undecaprenyl diphosphate + 8 diphosphate. Its function is as follows. Catalyzes the sequential condensation of isopentenyl diphosphate (IPP) with (2E,6E)-farnesyl diphosphate (E,E-FPP) to yield (2Z,6Z,10Z,14Z,18Z,22Z,26Z,30Z,34E,38E)-undecaprenyl diphosphate (di-trans,octa-cis-UPP). UPP is the precursor of glycosyl carrier lipid in the biosynthesis of bacterial cell wall polysaccharide components such as peptidoglycan and lipopolysaccharide. This Shewanella oneidensis (strain ATCC 700550 / JCM 31522 / CIP 106686 / LMG 19005 / NCIMB 14063 / MR-1) protein is Ditrans,polycis-undecaprenyl-diphosphate synthase ((2E,6E)-farnesyl-diphosphate specific).